We begin with the raw amino-acid sequence, 624 residues long: Multicopper oxidase elcG (624 aa).

Residues 1–18 (MACNILNFLTGLLSLSST) form the signal peptide. Plastocyanin-like domains follow at residues 48–160 (PGRA…IERG) and 216–373 (CMDA…TIRI). Asparagine 65 carries N-linked (GlcNAc...) asparagine glycosylation. Residues histidine 96, histidine 98, histidine 140, and histidine 142 each contribute to the Cu cation site. 3 N-linked (GlcNAc...) asparagine glycosylation sites follow: asparagine 271, asparagine 296, and asparagine 464. Residues 474–603 (FLFQDPSQIE…GGMGVVILDG (130 aa)) enclose the Plastocyanin-like 3 domain. Cu cation is bound by residues histidine 511, histidine 514, histidine 516, histidine 585, cysteine 586, histidine 587, and histidine 591.

The protein belongs to the multicopper oxidase family.

It participates in secondary metabolite biosynthesis. Multicopper oxidase; part of the gene cluster that mediates the biosynthesis of elsinochrome C, a perelyenequinone phytotoxin structurally similar to cercosporin. The first step of elsinochrome C biosynthesis is performed by the polyketide synthase elcA which catalyzes the formation of nor-toralactone. The starter unit acyltransferase (SAT) domain of elcA initiates polyketide extension by the selective utilization of acetyl-CoA, which is elongated to the heptaketide in the beta-ketoacyl synthase (KS) domain by successive condensations with six malonyl units introduced by the malonyl acyltransferase (MAT) domain. The product template (PT) domain catalyzes C4-C9 and C2-C11 aldol cyclizations and dehydrations to a trihydroxynaphthalene, which is thought to be delivered to the thioesterase (TE) domain for product release. The bifunctional enzyme elcB then methylates nor-toralactone to toralactone before conducting an unusual oxidative aromatic ring opening. The next step in perylenequinone biosynthesis is an O-methylation at the nascent OH-6 of the elcB product performed by the O-methyltransferase elcD. The oxidative coupling of the two monomeric naphthol units in perylenequinone biosynthesis is catalyzed by the FAD-dependent monooxygenase elcE and the multicopper oxidase elcG. ElcG might catalyze the first intermolecular coupling in a regio- and stereo-selective manner via a phenol radical coupling mechanism and the elcE could forge the second C-C bond intramolecularly via a hydride transfer mechanism. The fasciclin domain-containing protein elcF might also play a role duting this step. The last piece of the puzzle in the biosynthesis of elsinochrome C is the additional annulation by enolate coupling to afford the dihydrobenzo(ghi)perylenequinone system, catalyzed by the FAD-dependent monooxygenase elcH. The chain is Multicopper oxidase elcG from Phaeosphaeria nodorum (strain SN15 / ATCC MYA-4574 / FGSC 10173) (Glume blotch fungus).